The sequence spans 417 residues: Gamma-glutamyl phosphate reductase (417 aa).

Belongs to the gamma-glutamyl phosphate reductase family.

The protein localises to the cytoplasm. The enzyme catalyses L-glutamate 5-semialdehyde + phosphate + NADP(+) = L-glutamyl 5-phosphate + NADPH + H(+). It functions in the pathway amino-acid biosynthesis; L-proline biosynthesis; L-glutamate 5-semialdehyde from L-glutamate: step 2/2. Catalyzes the NADPH-dependent reduction of L-glutamate 5-phosphate into L-glutamate 5-semialdehyde and phosphate. The product spontaneously undergoes cyclization to form 1-pyrroline-5-carboxylate. This Proteus mirabilis (strain HI4320) protein is Gamma-glutamyl phosphate reductase.